A 134-amino-acid chain; its full sequence is Profilin-2 (134 aa).

Phosphothreonine is present on Thr114.

This sequence belongs to the profilin family. As to quaternary structure, occurs in many kinds of cells as a complex with monomeric actin in a 1:1 ratio. Post-translationally, phosphorylated by MAP kinases.

It is found in the cytoplasm. The protein localises to the cytoskeleton. Binds to actin and affects the structure of the cytoskeleton. At high concentrations, profilin prevents the polymerization of actin, whereas it enhances it at low concentrations. By binding to PIP2, it inhibits the formation of IP3 and DG. This Nicotiana tabacum (Common tobacco) protein is Profilin-2 (PRO2).